Reading from the N-terminus, the 578-residue chain is DNA mismatch repair protein MutL (578 aa).

The protein belongs to the DNA mismatch repair MutL/HexB family.

This protein is involved in the repair of mismatches in DNA. It is required for dam-dependent methyl-directed DNA mismatch repair. May act as a 'molecular matchmaker', a protein that promotes the formation of a stable complex between two or more DNA-binding proteins in an ATP-dependent manner without itself being part of a final effector complex. The sequence is that of DNA mismatch repair protein MutL from Carboxydothermus hydrogenoformans (strain ATCC BAA-161 / DSM 6008 / Z-2901).